A 330-amino-acid chain; its full sequence is Putative [LysW]-L-2-aminoadipate/[LysW]-L-glutamate phosphate reductase (330 aa).

NADP(+)-binding positions include 10–13 (SGYI) and 34–36 (SRR). Residue Cys142 is part of the active site. Asn297 contributes to the NADP(+) binding site.

The protein belongs to the NAGSA dehydrogenase family. Type 1 subfamily. LysY sub-subfamily.

It localises to the cytoplasm. The enzyme catalyses [amino-group carrier protein]-C-terminal-N-(1-carboxy-5-oxopentan-1-yl)-L-glutamine + phosphate + NADP(+) = [amino-group carrier protein]-C-terminal-N-(1-carboxy-5-phosphooxy-5-oxopentan-1-yl)-L-glutamine + NADPH + H(+). The catalysed reaction is [amino-group carrier protein]-C-terminal-gamma-(L-glutamyl-5-semialdehyde)-L-glutamate + phosphate + NADP(+) = [amino-group carrier protein]-C-terminal-gamma-(5-phospho-L-glutamyl)-L-glutamate + NADPH + H(+). The protein operates within amino-acid biosynthesis; L-lysine biosynthesis via AAA pathway; L-lysine from L-alpha-aminoadipate (Thermus route): step 3/5. Its pathway is amino-acid biosynthesis; L-arginine biosynthesis. Its function is as follows. Involved in both the arginine and lysine biosynthetic pathways. In Thermococcus kodakarensis (strain ATCC BAA-918 / JCM 12380 / KOD1) (Pyrococcus kodakaraensis (strain KOD1)), this protein is Putative [LysW]-L-2-aminoadipate/[LysW]-L-glutamate phosphate reductase.